A 581-amino-acid polypeptide reads, in one-letter code: Zinc metalloproteinase nas-36 (581 aa).

Positions 1-95 (MKEIAHSQAY…FRGANEKGKR (95 aa)) are excised as a propeptide. N-linked (GlcNAc...) asparagine glycosylation is present at Asn-67. The 194-residue stretch at 97–290 (AAEYDAKWFQ…IKLINEAYCK (194 aa)) folds into the Peptidase M12A domain. Disulfide bonds link Cys-137–Cys-289, Cys-159–Cys-178, Cys-293–Cys-313, Cys-315–Cys-324, and Cys-336–Cys-364. His-186 is a binding site for Zn(2+). Glu-187 is an active-site residue. Zn(2+) contacts are provided by His-190 and His-196. Residues 285-325 (NEAYCKGDCKEKNECKNGGYLNPSNCQSCLCPSGFGGSKCE) form the EGF-like domain. The CUB domain maps to 336-449 (CGGTLKAIID…TGFKLKFRKT (114 aa)). Asn-418 carries an N-linked (GlcNAc...) asparagine glycan. The TSP type-1 domain occupies 474 to 523 (NDIWSEWGEWSQCSRSCGACGIKSRLRICKTAQCSGKVQQFLTCNLQACP). 3 cysteine pairs are disulfide-bonded: Cys-486/Cys-517, Cys-490/Cys-522, and Cys-502/Cys-507.

Zn(2+) is required as a cofactor.

The protein localises to the secreted. Its activity is regulated as follows. Inhibited by 1,10-phenanthroline. In terms of biological role, metalloprotease. Involved in molting, a process during larval stages in which a new cuticle is formed and the old cuticle is shed. The chain is Zinc metalloproteinase nas-36 from Brugia malayi (Filarial nematode worm).